Consider the following 218-residue polypeptide: Eukaryotic translation initiation factor 3 subunit K (218 aa).

Residues 42 to 204 (YDLEANLAVL…NIKPKNIVEK (163 aa)) enclose the PCI domain.

This sequence belongs to the eIF-3 subunit K family. As to quaternary structure, component of the eukaryotic translation initiation factor 3 (eIF-3) complex, which is composed of 13 subunits: eif3a, eif3b, eif3c, eif3d, eif3e, eif3f, eif3g, eif3h, eif3i, eif3j, eif3k, eif3l and eif3m.

It localises to the nucleus. Its subcellular location is the cytoplasm. Its function is as follows. Component of the eukaryotic translation initiation factor 3 (eIF-3) complex, which is involved in protein synthesis of a specialized repertoire of mRNAs and, together with other initiation factors, stimulates binding of mRNA and methionyl-tRNAi to the 40S ribosome. The eIF-3 complex specifically targets and initiates translation of a subset of mRNAs involved in cell proliferation. In Xenopus tropicalis (Western clawed frog), this protein is Eukaryotic translation initiation factor 3 subunit K (eif3k).